We begin with the raw amino-acid sequence, 306 residues long: Dermonecrotic toxin LiSicTox-alphaIA2bi (306 aa).

The signal sequence occupies residues 1–18 (MLPYIALILVCWSVLSQA). The propeptide occupies 19 to 26 (AQTDVEGR). The active site involves histidine 38. Mg(2+)-binding residues include glutamate 58 and aspartate 60. The Nucleophile role is filled by histidine 74. 2 cysteine pairs are disulfide-bonded: cysteine 78-cysteine 84 and cysteine 80-cysteine 223. Position 118 (aspartate 118) interacts with Mg(2+). N-linked (GlcNAc...) asparagine glycosylation is present at asparagine 283.

Belongs to the arthropod phospholipase D family. Class II subfamily. The cofactor is Mg(2+). Expressed by the venom gland.

It is found in the secreted. It carries out the reaction an N-(acyl)-sphingosylphosphocholine = an N-(acyl)-sphingosyl-1,3-cyclic phosphate + choline. The enzyme catalyses an N-(acyl)-sphingosylphosphoethanolamine = an N-(acyl)-sphingosyl-1,3-cyclic phosphate + ethanolamine. The catalysed reaction is a 1-acyl-sn-glycero-3-phosphocholine = a 1-acyl-sn-glycero-2,3-cyclic phosphate + choline. It catalyses the reaction a 1-acyl-sn-glycero-3-phosphoethanolamine = a 1-acyl-sn-glycero-2,3-cyclic phosphate + ethanolamine. Dermonecrotic toxins cleave the phosphodiester linkage between the phosphate and headgroup of certain phospholipids (sphingolipid and lysolipid substrates), forming an alcohol (often choline) and a cyclic phosphate. This toxin acts on sphingomyelin (SM). It may also act on ceramide phosphoethanolamine (CPE), lysophosphatidylcholine (LPC) and lysophosphatidylethanolamine (LPE), but not on lysophosphatidylserine (LPS), and lysophosphatidylglycerol (LPG). It acts by transphosphatidylation, releasing exclusively cyclic phosphate products as second products. Induces dermonecrosis, hemolysis, increased vascular permeability, edema, inflammatory response, and platelet aggregation. This chain is Dermonecrotic toxin LiSicTox-alphaIA2bi, found in Loxosceles intermedia (Brown spider).